Reading from the N-terminus, the 277-residue chain is Large ribosomal subunit protein uL2 (277 aa).

The disordered stretch occupies residues 225 to 277 (MNPVDHPHGGGEGKTSGGRNSVTPWGVPTKGKKTRKRGKHSDKYIKVSSVRKR). Residues 254–264 (KGKKTRKRGKH) show a composition bias toward basic residues.

This sequence belongs to the universal ribosomal protein uL2 family. As to quaternary structure, part of the 50S ribosomal subunit. Forms a bridge to the 30S subunit in the 70S ribosome.

One of the primary rRNA binding proteins. Required for association of the 30S and 50S subunits to form the 70S ribosome, for tRNA binding and peptide bond formation. It has been suggested to have peptidyltransferase activity; this is somewhat controversial. Makes several contacts with the 16S rRNA in the 70S ribosome. This Anaplasma marginale (strain Florida) protein is Large ribosomal subunit protein uL2.